The sequence spans 458 residues: Phosphomethylpyrimidine synthase (458 aa).

Substrate contacts are provided by residues asparagine 80, methionine 109, tyrosine 139, histidine 175, 195–197, 236–239, and glutamate 275; these read SRG and DSLR. Residue histidine 279 participates in Zn(2+) binding. Position 302 (tyrosine 302) interacts with substrate. Residue histidine 343 participates in Zn(2+) binding. Residues cysteine 423, cysteine 426, and cysteine 431 each coordinate [4Fe-4S] cluster.

It belongs to the ThiC family. Requires [4Fe-4S] cluster as cofactor.

It carries out the reaction 5-amino-1-(5-phospho-beta-D-ribosyl)imidazole + S-adenosyl-L-methionine = 4-amino-2-methyl-5-(phosphooxymethyl)pyrimidine + CO + 5'-deoxyadenosine + formate + L-methionine + 3 H(+). The protein operates within cofactor biosynthesis; thiamine diphosphate biosynthesis. In terms of biological role, catalyzes the synthesis of the hydroxymethylpyrimidine phosphate (HMP-P) moiety of thiamine from aminoimidazole ribotide (AIR) in a radical S-adenosyl-L-methionine (SAM)-dependent reaction. The polypeptide is Phosphomethylpyrimidine synthase (Acaryochloris marina (strain MBIC 11017)).